The primary structure comprises 205 residues: Ypt/Rab-type GTPase Rab7 (205 aa).

Residues 17 to 23 (SGVGKTS), 33 to 40 (FSASYKAT), G66, 125 to 128 (NKID), and 157 to 159 (SAK) each bind GTP. The Effector region motif lies at 37 to 45 (YKATIGADF). 2 S-geranylgeranyl cysteine lipidation sites follow: C203 and C205. C205 is modified (cysteine methyl ester).

It belongs to the small GTPase superfamily. Rab family.

It localises to the cell membrane. With respect to regulation, alternates between an inactive form bound to GDP and an active form bound to GTP. Activated by guanine nucleotide-exchange factors (GEFs), and inactivated by GTPase-activating proteins (GAPs). In terms of biological role, ypt/Rab-type GTPases are key regulators of membrane trafficking and intracellular vesicular transport. They act as molecular switches that convert between GTP-bound and GDP-bound states, and regulate virtually all steps of membrane traffic from the formation of the transport vesicle at the donor membrane to its fusion at the target membrane. In the GDP-bound state, Ypt proteins are predominantly cytosolic, solubilized through the interaction with a GDP dissociation inhibitor (GDI). In the GTP-bound state, the proteins are membrane bound and interact with specific effector proteins that select cargo, promote vesicle movement, or verify the correct site of fusion. In Neurospora crassa (strain ATCC 24698 / 74-OR23-1A / CBS 708.71 / DSM 1257 / FGSC 987), this protein is Ypt/Rab-type GTPase Rab7 (gtp-14).